The following is a 411-amino-acid chain: Class E basic helix-loop-helix protein 40 (411 aa).

The tract at residues 1-20 is disordered; that stretch reads MERIPSAQPPPTCLPKAPGL. Residues 1 to 139 are essential for interaction with BMAL1, E-box binding and repressor activity against the CLOCK-BMAL1 heterodimer; sequence MERIPSAQPP…LSGRNLEAGQ (139 aa). The region spanning 52–107 is the bHLH domain; that stretch reads TYKLPHRLIEKKRRDRINECIAQLKDLLPEHLKLTTLGHLEKAVVLELTLKHVKAL. The segment at 75-79 is necessary for interaction with RXRA and repressor activity against RXRA; the sequence is LKDLL. In terms of domain architecture, Orange spans 142-175; it reads FCSGFQTCAREVLQYLAKHENTRDLKSSQLVTHL. Lys-159 participates in a covalent cross-link: Glycyl lysine isopeptide (Lys-Gly) (interchain with G-Cter in SUMO1, SUMO2 and SUMO3). Residue Lys-167 forms a Glycyl lysine isopeptide (Lys-Gly) (interchain with G-Cter in SUMO2) linkage. Residues 227 to 294 form a disordered region; sequence FAPSGGEQSG…PPTKKSRMQL (68 aa). Ser-235 bears the Phosphoserine mark. Basic and acidic residues predominate over residues 248–271; it reads ELEKGDLRSEQPYFKSDHGRRFAV. Residue Lys-279 forms a Glycyl lysine isopeptide (Lys-Gly) (interchain with G-Cter in SUMO1); alternate linkage. Lys-279 is covalently cross-linked (Glycyl lysine isopeptide (Lys-Gly) (interchain with G-Cter in SUMO1, SUMO2 and SUMO3); alternate). Lys-279 participates in a covalent cross-link: Glycyl lysine isopeptide (Lys-Gly) (interchain with G-Cter in SUMO2); alternate. Lys-288 participates in a covalent cross-link: Glycyl lysine isopeptide (Lys-Gly) (interchain with G-Cter in SUMO2). Residue Ser-383 is modified to Phosphoserine.

As to quaternary structure, homodimer. Heterodimer with BHLHE41/DEC2. Interacts with ubiquitin-conjugating enzyme UBE2I/UBC9. Interacts with HDAC1, SUMO1, RXRA and BMAL1. Interacts with TCF3/E47. In terms of processing, ubiquitinated; which may lead to proteasomal degradation. Post-translationally, sumoylation inhibits its ubiquitination and promotes its negative regulation of the CLOCK-BMAL1 heterodimer transcriptional activator activity.

It localises to the cytoplasm. It is found in the nucleus. Its function is as follows. Transcriptional repressor involved in the regulation of the circadian rhythm by negatively regulating the activity of the clock genes and clock-controlled genes. Acts as the negative limb of a novel autoregulatory feedback loop (DEC loop) which differs from the one formed by the PER and CRY transcriptional repressors (PER/CRY loop). Both these loops are interlocked as it represses the expression of PER1/2 and in turn is repressed by PER1/2 and CRY1/2. Represses the activity of the circadian transcriptional activator: CLOCK-BMAL1|BMAL2 heterodimer by competing for the binding to E-box elements (5'-CACGTG-3') found within the promoters of its target genes. Negatively regulates its own expression and the expression of DBP and BHLHE41/DEC2. Acts as a corepressor of RXR and the RXR-LXR heterodimers and represses the ligand-induced RXRA and NR1H3/LXRA transactivation activity. May function as a transcriptional factor for neuronal differentiation. Represses the transcription of NR0B2 and attentuates the transactivation of NR0B2 by the CLOCK-BMAL1 complex. Drives the circadian rhythm of blood pressure through transcriptional repression of ATP1B1 in the cardiovascular system. The protein is Class E basic helix-loop-helix protein 40 (Bhlhe40) of Mus musculus (Mouse).